We begin with the raw amino-acid sequence, 520 residues long: BBSome complex member BBS4 (520 aa).

The disordered stretch occupies residues 1-26; the sequence is MAEVKLGMKTQVPASVESQKPRSKKA. Positions 1-66 are required for localization to centrosomes; that stretch reads MAEVKLGMKT…EQLQETQGLC (66 aa). TPR repeat units lie at residues 67–100, 102–134, 135–167, 168–201, 203–235, 237–269, 270–303, 304–337, 339–371, and 373–408; these read EYAIYVQALIFRLEGNIQESLELFQTCAVLSPQC, DNLKQVARSLFLLGKHKAATEVYNEAAKLNQKD, WEICHNLGVCYTYLKQFNKAQDQLHSALQLNKH, DLTYIMLGKIHLLQGDLDKAIEIYKKAVEFSPEN, ELLTTLGLLYLQLGVYQKAFEHLGNALTYDPAN, KAILAAGSMMQTHGDFDVALTKYRVVACAIPES, PPLWNNIGMCFFGKKKYVAAISCLKRANYLAPFD, WKILYNLGLVHLTMQQYASAFHFLSAAINFQPKM, ELYMLLAVALTNLEDIENARRAYVEAVRLDKCN, and LVNLNYAVLLYNQGEKKSALAQYQEMEKKVNFLKDN. Positions 101-337 are interaction with PCM1; the sequence is ADNLKQVARS…SAAINFQPKM (237 aa). A required for localization to centrosomes region spans residues 338–520; the sequence is GELYMLLAVA…TEASEQKKEK (183 aa). The interval 488–520 is disordered; sequence AQLPKPPSLPLEPEPEPTVEASPTEASEQKKEK.

The protein belongs to the BBS4 family. In terms of assembly, part of BBSome complex, that contains BBS1, BBS2, BBS4, BBS5, BBS7, BBS8/TTC8, BBS9 and BBIP10. Interacts with PCM1 and DCTN1. Interacts with DC28B. Interacts with ALDOB and C2CD3. Interacts with PKD1. Interacts with CEP290. Interacts with DLEC1. In terms of tissue distribution, expressed in the hippocampus and dentate gyrus, the columnar epithelial cells of bronchioles, the olfactory epithelium and the inner segment and outer nuclear layer of the retina. Expressed in testis.

The protein localises to the cytoplasm. It localises to the cytoskeleton. Its subcellular location is the microtubule organizing center. The protein resides in the centrosome. It is found in the cell projection. The protein localises to the cilium membrane. It localises to the centriolar satellite. Its subcellular location is the cilium. The protein resides in the flagellum. Functionally, the BBSome complex is thought to function as a coat complex required for sorting of specific membrane proteins to the primary cilia. The BBSome complex is required for ciliogenesis but is dispensable for centriolar satellite function. This ciliogenic function is mediated in part by the Rab8 GDP/GTP exchange factor, which localizes to the basal body and contacts the BBSome. Rab8(GTP) enters the primary cilium and promotes extension of the ciliary membrane. Firstly the BBSome associates with the ciliary membrane and binds to RAB3IP/Rabin8, the guanosyl exchange factor (GEF) for Rab8 and then the Rab8-GTP localizes to the cilium and promotes docking and fusion of carrier vesicles to the base of the ciliary membrane. The BBSome complex, together with the LTZL1, controls SMO ciliary trafficking and contributes to the sonic hedgehog (SHH) pathway regulation. Required for proper BBSome complex assembly and its ciliary localization. Required for microtubule anchoring at the centrosome but not for microtubule nucleation. May be required for the dynein-mediated transport of pericentriolar proteins to the centrosome. This chain is BBSome complex member BBS4 (Bbs4), found in Mus musculus (Mouse).